A 160-amino-acid polypeptide reads, in one-letter code: Protein Vago (160 aa).

The first 23 residues, 1–23, serve as a signal peptide directing secretion; it reads MESISSMIYLVAMMSLIIGGSQA.

As to expression, expressed in fat body.

Its subcellular location is the secreted. In terms of biological role, probably involved in the antiviral immune response. May have a role in controlling viral load in the adult fat body, after infection with viruses such as the Drosophila C virus. This chain is Protein Vago, found in Drosophila melanogaster (Fruit fly).